A 614-amino-acid chain; its full sequence is Chaperone protein DnaK (614 aa).

The residue at position 174 (Thr174) is a Phosphothreonine; by autocatalysis. Positions 576–614 (QTGGAAPGPDMGADPGAGGAQGDDNVVDAEYTEVDKDQK) are disordered. The span at 578 to 589 (GGAAPGPDMGAD) shows a compositional bias: low complexity.

Belongs to the heat shock protein 70 family.

Functionally, acts as a chaperone. This Desulfitobacterium hafniense (strain DSM 10664 / DCB-2) protein is Chaperone protein DnaK.